A 397-amino-acid chain; its full sequence is Linalool dehydratase/isomerase (397 aa).

Positions 1–26 (MRFTLKTTAIVSAAALLAGFGPPPRA) are cleaved as a signal peptide. Asp64 serves as the catalytic Proton donor/acceptor. Cystine bridges form between Cys74–Cys127 and Cys196–Cys205. Residue Cys196 coordinates (2E)-geraniol.

In terms of assembly, homotetramer. Homopentamer.

It is found in the periplasm. It catalyses the reaction (S)-linalool = beta-myrcene + H2O. The catalysed reaction is (2E)-geraniol = (S)-linalool. It participates in terpene metabolism; monoterpene degradation. With respect to regulation, is inhibited by molecular oxygen, high salt concentrations (NaCl, KCl, or MgCl(2)), urea, and Ti(III)citrate. Activity is not affected by EDTA. Anaerobically catalyzes the stereospecific hydration of beta-myrcene to (3S)-linalool and the isomerization of (3S)-linalool to geraniol. Is thus involved in the initial steps of the anaerobic degradation of the monoterpene beta-myrcene. Also catalyzes the reverse reactions, i.e. the isomerization of geraniol to linalool and the dehydration of linalool to myrcene. In this direction, the formation of myrcene from geraniol may be seen as a detoxification process for the monoterpene alcohol. Shows a relatively broad substrate specificity and can use various geraniol and linalool derivatives. Substrates required a specific alpha-methylallyl alcohol signature motif. Neither the monoterpenes alpha- and beta-ocimene nor the monoterpenoids citronellol and nerol can be used as substrates. This Castellaniella defragrans (strain DSM 12143 / CCUG 39792 / 65Phen) (Alcaligenes defragrans) protein is Linalool dehydratase/isomerase.